A 317-amino-acid polypeptide reads, in one-letter code: MTPNKPTLHPRNRHQGRYDFPSLIKAHPDLARFTITNPHGKPSIDFANPEAVRVFNRALLKAQYGIQHWDIPADYLCPPIPGRADYIHVAADLLADDNAGDVPRGTQVRALDVGVGANCIYPLLGHSDYRWRFLGSDIDPVALASAKAIVQANGLGKAITLRQQANRAHILSGLLQEGERFDLTLCNPPFHASRDEATRGSQRKWKNLGKQDPKRKLPVLNFGGQNNELWCEGGEIRFVTQLIGESVQYAERVLWFTSLVSKASNLPGIEAALKKSGAKAVRIIEMGQGQKQSRMVAWSFHDDAARQAWHAQRKSQA.

It belongs to the methyltransferase superfamily. METTL16/RlmF family.

Its subcellular location is the cytoplasm. It catalyses the reaction adenosine(1618) in 23S rRNA + S-adenosyl-L-methionine = N(6)-methyladenosine(1618) in 23S rRNA + S-adenosyl-L-homocysteine + H(+). Specifically methylates the adenine in position 1618 of 23S rRNA. The chain is Ribosomal RNA large subunit methyltransferase F from Pseudomonas putida (strain ATCC 700007 / DSM 6899 / JCM 31910 / BCRC 17059 / LMG 24140 / F1).